Here is a 476-residue protein sequence, read N- to C-terminus: Glutamate--tRNA ligase (476 aa).

A 'HIGH' region motif is present at residues 9 to 19 (PSPTGTLHIGT). A 'KMSKS' region motif is present at residues 248–252 (KLSKR). Position 251 (K251) interacts with ATP.

The protein belongs to the class-I aminoacyl-tRNA synthetase family. Glutamate--tRNA ligase type 1 subfamily. Monomer.

It is found in the cytoplasm. The enzyme catalyses tRNA(Glu) + L-glutamate + ATP = L-glutamyl-tRNA(Glu) + AMP + diphosphate. Functionally, catalyzes the attachment of glutamate to tRNA(Glu) in a two-step reaction: glutamate is first activated by ATP to form Glu-AMP and then transferred to the acceptor end of tRNA(Glu). In Synechococcus sp. (strain CC9311), this protein is Glutamate--tRNA ligase.